A 274-amino-acid polypeptide reads, in one-letter code: Bis(5'-nucleosyl)-tetraphosphatase, symmetrical (274 aa).

Belongs to the Ap4A hydrolase family.

The catalysed reaction is P(1),P(4)-bis(5'-adenosyl) tetraphosphate + H2O = 2 ADP + 2 H(+). Its function is as follows. Hydrolyzes diadenosine 5',5'''-P1,P4-tetraphosphate to yield ADP. This Buchnera aphidicola subsp. Acyrthosiphon pisum (strain 5A) protein is Bis(5'-nucleosyl)-tetraphosphatase, symmetrical.